We begin with the raw amino-acid sequence, 244 residues long: WUSCHEL-related homeobox 3 (244 aa).

The homeobox; WUS-type DNA-binding region spans 4–68 (VASTRWCPTP…NHKARDRQKL (65 aa)).

It belongs to the WUS homeobox family. In terms of tissue distribution, expressed in aerial parts of seedlings, inflorescences and flowers at low level. Expressed in a restricted number of L1 cells at the lateral regions of flower primordia.

The protein resides in the nucleus. Probable transcription factor required to initiate organ founder cells in a lateral domain of shoot meristems. Involved in the lateral sepal axis-dependent development of flowers, probably by regulating the proliferation of L1 cells at the lateral region of flower primordia. Required for the formation of the margin cells of the first and second whorl organs. The protein is WUSCHEL-related homeobox 3 (WOX3) of Arabidopsis thaliana (Mouse-ear cress).